Here is a 63-residue protein sequence, read N- to C-terminus: Male-specific sperm protein Mst84Da (63 aa).

The protein belongs to the MST(3)CGP family. In terms of tissue distribution, testis.

This chain is Male-specific sperm protein Mst84Da (Mst84Da), found in Drosophila melanogaster (Fruit fly).